The primary structure comprises 247 residues: Ras-like protein family member 11B (247 aa).

A small GTPase-like region spans residues 28 to 245 (AGRRLVKIAV…ALSAKVRTVT (218 aa)). GTP contacts are provided by residues 39-46 (GASGVGKT), 86-93 (DTPGIQVH), and 151-154 (NKAD). Residues 202–228 (PKQQPSSTPEKRRTSLIPRPKSPNMQD) are disordered.

It belongs to the small GTPase superfamily. Ras family.

The enzyme catalyses GTP + H2O = GDP + phosphate + H(+). In Mus musculus (Mouse), this protein is Ras-like protein family member 11B.